Reading from the N-terminus, the 867-residue chain is Schizokinen transporter SchT (867 aa).

The disordered stretch occupies residues histidine 40–alanine 62. A compositionally biased stretch (polar residues) spans glutamate 46 to alanine 62. The TonB box signature appears at isoleucine 185–threonine 192. The 111-residue stretch at proline 197–arginine 307 folds into the TBDR plug domain. Residues lysine 313–tryptophan 867 enclose the TBDR beta-barrel domain. Positions alanine 850 to tryptophan 867 match the TonB C-terminal box motif.

This sequence belongs to the TonB-dependent receptor family.

Its subcellular location is the cell outer membrane. Functionally, involved in the TonB-dependent uptake of iron in complex with schizokinen, a dihydroxamate-type siderophore. In Nostoc sp. (strain PCC 7120 / SAG 25.82 / UTEX 2576), this protein is Schizokinen transporter SchT.